The following is a 418-amino-acid chain: UDP-N-acetylglucosamine 1-carboxyvinyltransferase (418 aa).

22-23 contacts phosphoenolpyruvate; sequence KN. A UDP-N-acetyl-alpha-D-glucosamine-binding site is contributed by Arg-91. Residue Cys-115 is the Proton donor of the active site. Cys-115 carries the post-translational modification 2-(S-cysteinyl)pyruvic acid O-phosphothioketal. UDP-N-acetyl-alpha-D-glucosamine contacts are provided by Asp-303 and Ile-325.

It belongs to the EPSP synthase family. MurA subfamily.

It localises to the cytoplasm. It carries out the reaction phosphoenolpyruvate + UDP-N-acetyl-alpha-D-glucosamine = UDP-N-acetyl-3-O-(1-carboxyvinyl)-alpha-D-glucosamine + phosphate. The protein operates within cell wall biogenesis; peptidoglycan biosynthesis. In terms of biological role, cell wall formation. Adds enolpyruvyl to UDP-N-acetylglucosamine. The polypeptide is UDP-N-acetylglucosamine 1-carboxyvinyltransferase (Syntrophobacter fumaroxidans (strain DSM 10017 / MPOB)).